Reading from the N-terminus, the 500-residue chain is Cholesterol 24-hydroxylase (500 aa).

A helical membrane pass occupies residues 3–23 (PGLLLLGSAVLLAFGLCCTFV). Cys437 contributes to the heme binding site.

It belongs to the cytochrome P450 family. It depends on heme as a cofactor. Expressed in brain. The mRNA was broadly distributed with higher levels in gray matter zones and lower levels in regions rich in white matter. Not detected in fetal sample but its expression increases linearly with age.

It localises to the endoplasmic reticulum membrane. It is found in the microsome membrane. The protein resides in the postsynapse. Its subcellular location is the presynapse. The protein localises to the cell projection. It localises to the dendrite. The enzyme catalyses cholesterol + reduced [NADPH--hemoprotein reductase] + O2 = (24S)-hydroxycholesterol + oxidized [NADPH--hemoprotein reductase] + H2O + H(+). It carries out the reaction cholestanol + reduced [NADPH--hemoprotein reductase] + O2 = (24S)-hydroxycholestanol + oxidized [NADPH--hemoprotein reductase] + H2O + H(+). The catalysed reaction is 7-dehydrocholesterol + reduced [NADPH--hemoprotein reductase] + O2 = cholesta-5,7-dien-3beta,24S-diol + oxidized [NADPH--hemoprotein reductase] + H2O + H(+). It catalyses the reaction 7-dehydrocholesterol + reduced [NADPH--hemoprotein reductase] + O2 = cholesta-5,7-dien-3beta,25-diol + oxidized [NADPH--hemoprotein reductase] + H2O + H(+). The enzyme catalyses desmosterol + reduced [NADPH--hemoprotein reductase] + O2 = (24Z),26-hydroxydesmosterol + oxidized [NADPH--hemoprotein reductase] + H2O + H(+). It carries out the reaction desmosterol + reduced [NADPH--hemoprotein reductase] + O2 = (24S)-25-epoxycholesterol + oxidized [NADPH--hemoprotein reductase] + H2O + H(+). The catalysed reaction is 4beta-hydroxycholesterol + reduced [NADPH--hemoprotein reductase] + O2 = 4beta,24S-dihydroxycholesterol + oxidized [NADPH--hemoprotein reductase] + H2O + H(+). It catalyses the reaction (24S)-hydroxycholesterol + reduced [NADPH--hemoprotein reductase] + O2 = (24S,25R)-24,26-dihydroxycholesterol + oxidized [NADPH--hemoprotein reductase] + H2O + H(+). The enzyme catalyses (24S)-hydroxycholesterol + reduced [NADPH--hemoprotein reductase] + O2 = 24S,25-dihydroxycholesterol + oxidized [NADPH--hemoprotein reductase] + H2O + H(+). It carries out the reaction 7alpha-hydroxycholesterol + reduced [NADPH--hemoprotein reductase] + O2 = (24S)-7alpha-dihydroxycholesterol + oxidized [NADPH--hemoprotein reductase] + H2O + H(+). The catalysed reaction is progesterone + reduced [NADPH--hemoprotein reductase] + O2 = 17alpha-hydroxyprogesterone + oxidized [NADPH--hemoprotein reductase] + H2O + H(+). It catalyses the reaction testosterone + reduced [NADPH--hemoprotein reductase] + O2 = 16beta,17beta-dihydroxyandrost-4-en-3-one + oxidized [NADPH--hemoprotein reductase] + H2O + H(+). The enzyme catalyses testosterone + reduced [NADPH--hemoprotein reductase] + O2 = 2-hydroxytestosterone + oxidized [NADPH--hemoprotein reductase] + H2O + H(+). It carries out the reaction testosterone + reduced [NADPH--hemoprotein reductase] + O2 = 6beta,17beta-dihydroxyandrost-4-en-3-one + oxidized [NADPH--hemoprotein reductase] + H2O + H(+). Its pathway is steroid metabolism; cholesterol degradation. It participates in lipid metabolism; C21-steroid hormone metabolism. Its function is as follows. P450 monooxygenase that plays a major role in cholesterol homeostasis in the brain. Primarily catalyzes the hydroxylation (with S stereochemistry) at C-24 of cholesterol side chain, triggering cholesterol diffusion out of neurons and its further degradation. By promoting constant cholesterol elimination in neurons, may activate the mevalonate pathway and coordinate the synthesis of new cholesterol and nonsterol isoprenoids involved in synaptic activity and learning. Further hydroxylates cholesterol derivatives and hormone steroids on both the ring and side chain of these molecules, converting them into active oxysterols involved in lipid signaling and biosynthesis. Acts as an epoxidase converting cholesta-5,24-dien-3beta-ol/desmosterol into (24S),25-epoxycholesterol, an abundant lipid ligand of nuclear NR1H2 and NR1H3 receptors shown to promote neurogenesis in developing brain. May also catalyze the oxidative metabolism of xenobiotics, such as clotrimazole. The polypeptide is Cholesterol 24-hydroxylase (Homo sapiens (Human)).